A 135-amino-acid polypeptide reads, in one-letter code: ATP synthase epsilon chain 1 (135 aa).

This sequence belongs to the ATPase epsilon chain family. As to quaternary structure, F-type ATPases have 2 components, CF(1) - the catalytic core - and CF(0) - the membrane proton channel. CF(1) has five subunits: alpha(3), beta(3), gamma(1), delta(1), epsilon(1). CF(0) has three main subunits: a, b and c.

The protein localises to the cell inner membrane. Its function is as follows. Produces ATP from ADP in the presence of a proton gradient across the membrane. In Nitrobacter hamburgensis (strain DSM 10229 / NCIMB 13809 / X14), this protein is ATP synthase epsilon chain 1.